A 465-amino-acid polypeptide reads, in one-letter code: Protein hedgehog (465 aa).

The N-palmitoyl cysteine moiety is linked to residue C79. E143, E144, D149, T179, E180, D183, and D185 together coordinate Ca(2+). Residue G251 is the site of Cholesterol glycine ester attachment.

This sequence belongs to the hedgehog family. As to quaternary structure, interacts with shf. Post-translationally, the C-terminal part of the hedgehog protein precursor displays an autoproteolysis activity that results in the cleavage of the full-length protein into two parts (N-product and C-product). In addition, the C-terminal part displays a cholesterol transferase activity that results by the covalent attachment of a cholesterol moiety to the C-terminal of the newly generated N-product. The N-product is the active species in both local and long-range signaling, whereas the C-product has no signaling activity. Cholesterylation is required for N-product targeting to lipid rafts and multimerization. In terms of processing, N-palmitoylation by Rasp of the hedgehog N-product, within the secretory pathway, is required for the embryonic and larval patterning activities of the hedgehog signal.

The protein localises to the nucleus. Its subcellular location is the cytoplasm. The protein resides in the cell membrane. The enzyme catalyses glycyl-L-cysteinyl-[protein] + cholesterol + H(+) = [protein]-C-terminal glycyl cholesterol ester + N-terminal L-cysteinyl-[protein]. Functionally, the C-terminal part of the hedgehog protein precursor displays an autoproteolysis activity that results in the cleavage of the full-length protein into two parts (N-product and C-product). In addition, the C-terminal part displays a cholesterol transferase activity that results by the covalent attachment of a cholesterol moiety to the C-terminal of the newly generated N-product. Once cleaved, the C-product has no signaling activity and diffuses from the cell. Its function is as follows. The dually lipidated hedgehog protein N-product is a morphogen which is essential for a variety of patterning events during development. Establishes the anterior-posterior axis of the embryonic segments and patterns the larval imaginal disks. Binds to the patched (ptc) receptor, which functions in association with smoothened (smo), to activate the transcription of target genes wingless (wg), decapentaplegic (dpp) and ptc. In the absence of hh, ptc represses the constitutive signaling activity of smo through fused (fu). Essential component of a signaling pathway which regulates the Duox-dependent gut immune response to bacterial uracil; required to activate Cad99C-dependent endosome formation, norpA-dependent Ca2+ mobilization and p38 MAPK, which are essential steps in the Duox-dependent production of reactive oxygen species (ROS) in response to intestinal bacterial infection. During photoreceptor differentiation, it up-regulates transcription of Ubr3, which in turn promotes the hh-signaling pathway by mediating the ubiquitination and degradation of cos. This Drosophila yakuba (Fruit fly) protein is Protein hedgehog.